A 1159-amino-acid polypeptide reads, in one-letter code: Ferroxidase HEPHL1 (1159 aa).

Residues methionine 1–threonine 24 form the signal peptide. 6 Plastocyanin-like domains span residues valine 25–cysteine 207, threonine 218–cysteine 366, glutamine 379–cysteine 561, threonine 571–cysteine 719, methionine 731–cysteine 907, and lysine 915–asparagine 1092. Over valine 25–alanine 1114 the chain is Extracellular. Cu cation is bound by residues histidine 127 and histidine 129. Asparagine 161 carries N-linked (GlcNAc...) asparagine glycosylation. Cysteine 181 and cysteine 207 are joined by a disulfide. Residues histidine 187 and histidine 189 each coordinate Cu cation. The N-linked (GlcNAc...) asparagine glycan is linked to asparagine 236. The cysteines at positions 285 and 366 are disulfide-linked. Positions 304, 347, and 352 each coordinate Cu cation. Asparagine 407 carries an N-linked (GlcNAc...) asparagine glycan. Cysteines 535 and 561 form a disulfide. Asparagine 589 carries N-linked (GlcNAc...) asparagine glycosylation. Cysteines 638 and 719 form a disulfide. Cu cation is bound by residues histidine 657, cysteine 700, histidine 705, and methionine 710. A glycan (N-linked (GlcNAc...) asparagine) is linked at asparagine 772. Cysteine 881 and cysteine 907 are disulfide-bonded. A glycan (N-linked (GlcNAc...) asparagine) is linked at asparagine 935. Positions 1003, 1006, 1008, 1048, 1049, 1050, 1054, and 1059 each coordinate Cu cation. A helical membrane pass occupies residues alanine 1115–leucine 1135. Over arginine 1136 to leucine 1159 the chain is Cytoplasmic.

It belongs to the multicopper oxidase family. It depends on Cu cation as a cofactor.

It localises to the membrane. It catalyses the reaction 4 Fe(2+) + O2 + 4 H(+) = 4 Fe(3+) + 2 H2O. Is a copper-binding glycoprotein with ferroxidase activity. It oxidizes Fe(2+) to Fe(3+) without releasing radical oxygen species. May be involved in the regulation of intracellular iron content. This Homo sapiens (Human) protein is Ferroxidase HEPHL1 (HEPHL1).